A 337-amino-acid chain; its full sequence is Perakine reductase (337 aa).

Y57 (proton donor) is an active-site residue. H126 contacts substrate. An NADP(+)-binding site is contributed by 205–214 (SPIGRGLFAG).

It belongs to the aldo/keto reductase family.

The catalysed reaction is raucaffrinoline + NADP(+) = perakine + NADPH + H(+). In terms of biological role, aldo-keto reductase involved in the biosynthesis of monoterpenoid indole alkaloids. Broad substrate specificity enzyme with a high selectivity in the group of alkaloids. Can use perakine, 19(S),20(R)-dihydro-peraksine-17,21-al, cinnamic aldehyde, p-coumaric aldehyde and 3-(3,4,5-trimethoxyphenyl)propanal as substrates, but not ketosteroids such as progesterone. NADPH could not be replaced by NADH. This chain is Perakine reductase (PR), found in Rauvolfia serpentina (Serpentine wood).